The chain runs to 516 residues: MEXLQGYLEXDRSRQQYFLYPLLFQEYIYTLAHGHGLNGSIFDEPVEIFGFDNKSSSVLVKRLITRMYQQNYLVYLVNDSNQNRSIGRNHFFYSQFFFQMVSEGFAAIVEIPFSLQLVFSSXEXERPKSHNLRSIHSIFPFLEDKFSHLNYVSEILIPHPIHMETLVQILQCWVRDVPSLHFLRFFLHEYDNWNSFITPNKSSYAFSKENKRFFWFFYNSYVFEFEFLLVFLRKQSYYLQSTSFGXFLDRXHFYGKKERLISACCNYSQKTLRFFKDPFMHYIRYQGKAILASRDTHILMKKWKCYLVNFWQYYFHFLSYPYRIQINQLKNHSFFFLGYLSSVLINPLAVKNKMLDHSFLIDTVTKKFDTTIPVIPLIGSLSKAKFCTVSGYPSSKTIWADLSDSDIVGRFGRICRNLSHYYSGSSKKQSLYRIKYXXRLSCARTLARKHKRTIRTLLQRLGSGFLEEFFTEEEQVLSLIFSKTTIPFPLYRLHRERIWYLDIIRINDLTNHLDWP.

Belongs to the intron maturase 2 family. MatK subfamily.

The protein localises to the plastid. It localises to the chloroplast. In terms of biological role, usually encoded in the trnK tRNA gene intron. Probably assists in splicing its own and other chloroplast group II introns. The sequence is that of Maturase K from Disporum sessile (Japanese fairy bells).